Consider the following 383-residue polypeptide: MLISQLKKFDAYPKTVDDFRVKTYTGAIVSIIGGVFILWLFFSQVTLYFSTDIHHELFVDTTRGEKLKINMDITFHHLPCAYLSLDAMDVSGEHQFDVAHNIFKKRLSPTGQPIIEAPPIREEEINKKESVKDNNDVVGCGSCYGAEDPSKGIGCCNTCEEVRVAYSKKGWGLDPSGIPQCIREGFTKNLVEQNGEGCQVYGFILVNKVAGNFHFAPGKSFQQHHMHVHDLQPFKDGSFNVSHTINRLSFGNDFPGIKNPLDDVTKTEMVGVGMFQYFVKVVPTIYEGLNGNRIATNQYSVTEHYRLLAKKGEEPSGLPGLFFMYDLSPIMMKVSERGKSFASFLTNVCAIIGGVFTVFGIFDSFIYYSTKNLQKKIDLGKTF.

Residues 1–26 are Cytoplasmic-facing; that stretch reads MLISQLKKFDAYPKTVDDFRVKTYTG. The helical transmembrane segment at 27–47 threads the bilayer; it reads AIVSIIGGVFILWLFFSQVTL. Residues 48–347 are Lumenal-facing; it reads YFSTDIHHEL…GKSFASFLTN (300 aa). A helical membrane pass occupies residues 348-368; sequence VCAIIGGVFTVFGIFDSFIYY. The Cytoplasmic segment spans residues 369-383; sequence STKNLQKKIDLGKTF.

Belongs to the ERGIC family.

It localises to the endoplasmic reticulum-Golgi intermediate compartment membrane. It is found in the golgi apparatus. The protein localises to the cis-Golgi network membrane. The protein resides in the endoplasmic reticulum membrane. In terms of biological role, possible role in transport between endoplasmic reticulum and Golgi. This is Probable endoplasmic reticulum-Golgi intermediate compartment protein 3 (ergic3) from Dictyostelium discoideum (Social amoeba).